Here is a 144-residue protein sequence, read N- to C-terminus: Transcriptional regulator SlyA (144 aa).

The region spanning 2 to 135 (ESPLGSDLAR…LITLIAKLEH (134 aa)) is the HTH marR-type domain. The H-T-H motif DNA-binding region spans 49-72 (QIQLAKAIGIEQPSLVRTLDQLEE).

This sequence belongs to the SlyA family. In terms of assembly, homodimer.

Functionally, transcription regulator that can specifically activate or repress expression of target genes. This chain is Transcriptional regulator SlyA, found in Shigella boydii serotype 18 (strain CDC 3083-94 / BS512).